We begin with the raw amino-acid sequence, 240 residues long: UDP-2,3-diacylglucosamine hydrolase (240 aa).

Aspartate 8, histidine 10, aspartate 41, asparagine 79, and histidine 114 together coordinate Mn(2+). 79-80 (NR) contacts substrate. Substrate is bound by residues aspartate 122, serine 160, asparagine 164, lysine 167, and histidine 195. Positions 195 and 197 each coordinate Mn(2+).

This sequence belongs to the LpxH family. The cofactor is Mn(2+).

Its subcellular location is the cell inner membrane. It carries out the reaction UDP-2-N,3-O-bis[(3R)-3-hydroxytetradecanoyl]-alpha-D-glucosamine + H2O = 2-N,3-O-bis[(3R)-3-hydroxytetradecanoyl]-alpha-D-glucosaminyl 1-phosphate + UMP + 2 H(+). The protein operates within glycolipid biosynthesis; lipid IV(A) biosynthesis; lipid IV(A) from (3R)-3-hydroxytetradecanoyl-[acyl-carrier-protein] and UDP-N-acetyl-alpha-D-glucosamine: step 4/6. Hydrolyzes the pyrophosphate bond of UDP-2,3-diacylglucosamine to yield 2,3-diacylglucosamine 1-phosphate (lipid X) and UMP by catalyzing the attack of water at the alpha-P atom. Involved in the biosynthesis of lipid A, a phosphorylated glycolipid that anchors the lipopolysaccharide to the outer membrane of the cell. This Yersinia pseudotuberculosis serotype O:1b (strain IP 31758) protein is UDP-2,3-diacylglucosamine hydrolase.